The sequence spans 1148 residues: Putative transcription factor SEF1 (1148 aa).

The interval 1-51 (MVKDNRDSDQDQDFSSAHMKRQPEQQQLQQHQFPSKKQRISHHDDSHQINH) is disordered. Ser-8 bears the Phosphoserine mark. Positions 57–87 (CTHCRQHKIKCDASQNFPHPCSRCEKIGLHC) form a DNA-binding region, zn(2)-C6 fungal-type. The segment at 148-180 (PTPGTIIPNPDSSPSSGSPTSSAAQRDSKVSVQ) is disordered. The segment covering 150–169 (PGTIIPNPDSSPSSGSPTSS) has biased composition (low complexity). The residue at position 263 (Ser-263) is a Phosphoserine. Positions 524-550 (EESEEDNNDSIDNNNNDKRNKKDEPHV) are disordered. Residues 538-550 (NNDKRNKKDEPHV) are compositionally biased toward basic and acidic residues. At Ser-806 the chain carries Phosphoserine. Over residues 1029-1050 (RSQSSMSHSRTPIASKSNNMTD) the composition is skewed to polar residues. The tract at residues 1029–1063 (RSQSSMSHSRTPIASKSNNMTDLHSVVSDPGSSKS) is disordered.

It localises to the nucleus. Putative transcription factor that seems to be involved in the sporulation process. Suppresses the lethal phenotype of RPM2 deletion. This is Putative transcription factor SEF1 (SEF1) from Saccharomyces cerevisiae (strain ATCC 204508 / S288c) (Baker's yeast).